The following is a 230-amino-acid chain: Ribonuclease 3 (230 aa).

The RNase III domain maps to Asn5 to Gly134. Glu47 is a Mg(2+) binding site. Asp51 is an active-site residue. Residues Asn120 and Glu123 each contribute to the Mg(2+) site. Glu123 is an active-site residue. One can recognise a DRBM domain in the interval Asp159–Lys228.

It belongs to the ribonuclease III family. As to quaternary structure, homodimer. It depends on Mg(2+) as a cofactor.

The protein localises to the cytoplasm. The enzyme catalyses Endonucleolytic cleavage to 5'-phosphomonoester.. Its function is as follows. Digests double-stranded RNA. Involved in the processing of primary rRNA transcript to yield the immediate precursors to the large and small rRNAs (23S and 16S). Processes some mRNAs, and tRNAs when they are encoded in the rRNA operon. Processes pre-crRNA and tracrRNA of type II CRISPR loci if present in the organism. The protein is Ribonuclease 3 of Wolbachia pipientis subsp. Culex pipiens (strain wPip).